Reading from the N-terminus, the 34-residue chain is Toxin Ptu1 (34 aa).

3 disulfides stabilise this stretch: Cys-5–Cys-20, Cys-12–Cys-26, and Cys-19–Cys-33.

The protein localises to the secreted. Functionally, binds reversibly and blocks N-type voltage-gated calcium channels (Cav). This is Toxin Ptu1 from Peirates turpis (Assassin bug).